The following is a 696-amino-acid chain: DNA ligase (696 aa).

Residues 41–45 (DGQYD), 90–91 (SL), and Glu-120 each bind NAD(+). Catalysis depends on Lys-122, which acts as the N6-AMP-lysine intermediate. Residues Arg-143, Glu-180, Lys-296, and Lys-320 each coordinate NAD(+). Zn(2+) is bound by residues Cys-414, Cys-417, Cys-433, and Cys-439. One can recognise a BRCT domain in the interval 603–692 (STPRTLEGLT…PDAVARPAEE (90 aa)).

Belongs to the NAD-dependent DNA ligase family. LigA subfamily. Mg(2+) is required as a cofactor. It depends on Mn(2+) as a cofactor.

The enzyme catalyses NAD(+) + (deoxyribonucleotide)n-3'-hydroxyl + 5'-phospho-(deoxyribonucleotide)m = (deoxyribonucleotide)n+m + AMP + beta-nicotinamide D-nucleotide.. Its function is as follows. DNA ligase that catalyzes the formation of phosphodiester linkages between 5'-phosphoryl and 3'-hydroxyl groups in double-stranded DNA using NAD as a coenzyme and as the energy source for the reaction. It is essential for DNA replication and repair of damaged DNA. The protein is DNA ligase of Kineococcus radiotolerans (strain ATCC BAA-149 / DSM 14245 / SRS30216).